The chain runs to 216 residues: Redox-sensing transcriptional repressor Rex (216 aa).

Positions 20–59 (QYYRLFKSLVEENVTRTNSQLISEKIGVDAATIRRDFSLF) form a DNA-binding region, H-T-H motif. 94-99 (GVGNLG) serves as a coordination point for NAD(+).

The protein belongs to the transcriptional regulatory Rex family. Homodimer.

Its subcellular location is the cytoplasm. Its function is as follows. Modulates transcription in response to changes in cellular NADH/NAD(+) redox state. In Lactococcus lactis subsp. cremoris (strain SK11), this protein is Redox-sensing transcriptional repressor Rex.